The primary structure comprises 329 residues: Ketol-acid reductoisomerase (NADP(+)) (329 aa).

Positions 1 to 181 (MKVYYENDAD…GATRSGVLQT (181 aa)) constitute a KARI N-terminal Rossmann domain. Residues 24-27 (YGSQ), Arg47, and 82-85 (DQVQ) each bind NADP(+). Residue His107 is part of the active site. An NADP(+)-binding site is contributed by Gly133. The region spanning 182–327 (TFREETETDL…GELRKMMSWL (146 aa)) is the KARI C-terminal knotted domain. 4 residues coordinate Mg(2+): Asp190, Glu194, Glu226, and Glu230. A substrate-binding site is contributed by Ser251.

The protein belongs to the ketol-acid reductoisomerase family. Mg(2+) is required as a cofactor.

The enzyme catalyses (2R)-2,3-dihydroxy-3-methylbutanoate + NADP(+) = (2S)-2-acetolactate + NADPH + H(+). It carries out the reaction (2R,3R)-2,3-dihydroxy-3-methylpentanoate + NADP(+) = (S)-2-ethyl-2-hydroxy-3-oxobutanoate + NADPH + H(+). It participates in amino-acid biosynthesis; L-isoleucine biosynthesis; L-isoleucine from 2-oxobutanoate: step 2/4. Its pathway is amino-acid biosynthesis; L-valine biosynthesis; L-valine from pyruvate: step 2/4. In terms of biological role, involved in the biosynthesis of branched-chain amino acids (BCAA). Catalyzes an alkyl-migration followed by a ketol-acid reduction of (S)-2-acetolactate (S2AL) to yield (R)-2,3-dihydroxy-isovalerate. In the isomerase reaction, S2AL is rearranged via a Mg-dependent methyl migration to produce 3-hydroxy-3-methyl-2-ketobutyrate (HMKB). In the reductase reaction, this 2-ketoacid undergoes a metal-dependent reduction by NADPH to yield (R)-2,3-dihydroxy-isovalerate. The chain is Ketol-acid reductoisomerase (NADP(+)) from Maridesulfovibrio salexigens (strain ATCC 14822 / DSM 2638 / NCIMB 8403 / VKM B-1763) (Desulfovibrio salexigens).